The following is a 456-amino-acid chain: tRNA-2-methylthio-N(6)-dimethylallyladenosine synthase (456 aa).

The MTTase N-terminal domain occupies 6-123 (KHVYIETYGC…LPNLIEEAQR (118 aa)). [4Fe-4S] cluster-binding residues include C15, C52, C86, C160, C164, and C167. Residues 146-380 (RAEGPTAYVS…RILEMAASIS (235 aa)) form the Radical SAM core domain. The 64-residue stretch at 381–444 (EAMVGTEQWV…KNSLRGRLIE (64 aa)) folds into the TRAM domain.

The protein belongs to the methylthiotransferase family. MiaB subfamily. As to quaternary structure, monomer. It depends on [4Fe-4S] cluster as a cofactor.

The protein localises to the cytoplasm. The catalysed reaction is N(6)-dimethylallyladenosine(37) in tRNA + (sulfur carrier)-SH + AH2 + 2 S-adenosyl-L-methionine = 2-methylsulfanyl-N(6)-dimethylallyladenosine(37) in tRNA + (sulfur carrier)-H + 5'-deoxyadenosine + L-methionine + A + S-adenosyl-L-homocysteine + 2 H(+). Functionally, catalyzes the methylthiolation of N6-(dimethylallyl)adenosine (i(6)A), leading to the formation of 2-methylthio-N6-(dimethylallyl)adenosine (ms(2)i(6)A) at position 37 in tRNAs that read codons beginning with uridine. This is tRNA-2-methylthio-N(6)-dimethylallyladenosine synthase from Dichelobacter nodosus (strain VCS1703A).